Here is a 452-residue protein sequence, read N- to C-terminus: Scaffold protein ILK (452 aa).

Met1 is modified (N-acetylmethionine). ANK repeat units lie at residues Asp2 to Gly30, Asp31 to Met63, Asn64 to Val96, Asn97 to Cys129, and Asn130 to Arg174. The tract at residues His33 to Lys139 is interaction with LIMS1. Thr173 is subject to Phosphothreonine. The segment at Gly180 to Trp212 is PH-like; mediates interaction with TGFB1I1. A Phosphoserine modification is found at Ser186. Residues Leu193–Leu446 enclose the Protein kinase domain. ATP contacts are provided by Asn200, Asn202, His203, and Ser204. Ser246 bears the Phosphoserine mark. Residues His270, Met272, and Asn279 each contribute to the ATP site. Asp339 serves as a coordination point for Mg(2+). ATP is bound at residue Lys341. Positions Lys363–Arg371 match the Nuclear localization signal motif. Residue Lys426 is modified to N6-acetyllysine.

The protein belongs to the protein kinase superfamily. TKL Ser/Thr protein kinase family. In terms of assembly, component of the heterotrimeric IPP (ILK-PINCH-PARVIN) complex composed of ILK, LIMS1/PINCH and PARVA; the complex binds to F-actin via the C-terminal tail of LIMS1 and the N-terminal region of PARVA, promoting F-actin filament bundling. Formation of the IPP complex is dependent on protein kinase C and precedes integrin-mediated cell adhesion and spreading. ILK also interacts with LIMS2/PINCH2 and with PARVB and PARVG which may substitute for LIMS1 and PARVA in the IPP complex; PARVA and PARVB compete for the same binding site. Interaction with PARVG promotes the establishment of cell polarity required for leukocyte migration. Interacts with the cytoplasmic domain of integrin ITGB1 and may also interact with integrins ITGB2, ITGB3 and/or ITGB5. Interacts probably also with TGFB1I1. Interacts (via ANK repeats) with EPHA1 (via SAM domain); stimulated by EFNA1 but independent of the kinase activity of EPHA1. Interacts with FERMT2. Interacts with LIMD2; leading to activate the protein kinase activity. Interacts with PXN/PAXILLIN (via LD motif 4). Interacts with CCDC25 (via cytoplasmic region); initiating the ILK-PARVB cascade to induce cytoskeleton rearrangement and directional migration of cells. Interacts with IQGAP1; the interaction is required for localization of IQGAP1 to the cell cortex. In terms of processing, phosphorylation by PAK1 modulates ILK subcellular location by promoting its nuclear export. As to expression, highly expressed in lung, heart, kidney, liver, brain, spleen and skeletal muscle. Weakly expressed in testis.

It localises to the cell junction. Its subcellular location is the focal adhesion. The protein localises to the cell membrane. It is found in the cytoplasm. The protein resides in the myofibril. It localises to the sarcomere. Its subcellular location is the cell projection. The protein localises to the lamellipodium. It is found in the nucleus. The protein resides in the cytoskeleton. It localises to the microtubule organizing center. Its subcellular location is the centrosome. The protein localises to the cell cortex. In terms of biological role, scaffold protein which mediates protein-protein interactions during a range of cellular events including focal adhesion assembly, cell adhesion and cell migration. Regulates integrin-mediated signal transduction by contributing to inside-out integrin activation. Recruits PARVA and LIMS1/PITCH to form the heterotrimeric IPP (ILK-PINCH-PARVIN) complex which binds to F-actin via the C-terminal tail of LIMS1 and the N-terminal region of PARVA, promoting F-actin filament bundling, a process required to generate force for actin cytoskeleton reorganization and subsequent dynamic cell adhesion events such as cell spreading and migration. Binding to PARVA promotes effective assembly of ILK into focal adhesions while PARVA-bound ILK can simultaneously engage integrin-beta cytoplasmic tails to mediate cell adhesion. Plays a role with PARVG in promoting the cell adhesion and spreading of leukocytes. Acts as an upstream effector of both AKT1/PKB and GSK3. Mediates trafficking of caveolae to the cell surface in an ITGB1-dependent manner by promoting the recruitment of IQGAP1 to the cell cortex which cooperates with its effector DIAPH1 to locally stabilize microtubules and allow stable insertion of caveolae into the plasma membrane. Required for the maintenance of mitotic spindle integrity by promoting phosphorylation of TACC3 by AURKA. Associates with chromatin and may act as a negative regulator of transcription when located in the nucleus. The protein is Scaffold protein ILK of Mus musculus (Mouse).